The sequence spans 154 residues: Large ribosomal subunit protein uL13 (154 aa).

The protein belongs to the universal ribosomal protein uL13 family. Part of the 50S ribosomal subunit.

In terms of biological role, this protein is one of the early assembly proteins of the 50S ribosomal subunit, although it is not seen to bind rRNA by itself. It is important during the early stages of 50S assembly. In Brucella anthropi (strain ATCC 49188 / DSM 6882 / CCUG 24695 / JCM 21032 / LMG 3331 / NBRC 15819 / NCTC 12168 / Alc 37) (Ochrobactrum anthropi), this protein is Large ribosomal subunit protein uL13.